A 200-amino-acid polypeptide reads, in one-letter code: Recombination protein RecR (200 aa).

Residues 59 to 74 (CSTCGSLDTQDPCAIC) form a C4-type zinc finger. The 96-residue stretch at 82–177 (SLICVVEEVG…TVSMLARGVP (96 aa)) folds into the Toprim domain.

It belongs to the RecR family.

In terms of biological role, may play a role in DNA repair. It seems to be involved in an RecBC-independent recombinational process of DNA repair. It may act with RecF and RecO. The protein is Recombination protein RecR of Phenylobacterium zucineum (strain HLK1).